Consider the following 375-residue polypeptide: Tyrosine--tRNA ligase (375 aa).

Positions 37, 168, 172, 175, and 190 each coordinate L-tyrosine. Positions 251–255 (KMSKS) match the 'KMSKS' region motif. Residue lysine 254 coordinates ATP.

It belongs to the class-I aminoacyl-tRNA synthetase family. TyrS type 4 subfamily. In terms of assembly, homodimer.

It localises to the cytoplasm. It catalyses the reaction tRNA(Tyr) + L-tyrosine + ATP = L-tyrosyl-tRNA(Tyr) + AMP + diphosphate + H(+). Catalyzes the attachment of tyrosine to tRNA(Tyr) in a two-step reaction: tyrosine is first activated by ATP to form Tyr-AMP and then transferred to the acceptor end of tRNA(Tyr). The sequence is that of Tyrosine--tRNA ligase from Thermococcus onnurineus (strain NA1).